Here is a 359-residue protein sequence, read N- to C-terminus: Hyaluronan and proteoglycan link protein 3 (359 aa).

The first 17 residues, 1–17 (MSLLFLVLLSPFPCVLG), serve as a signal peptide directing secretion. The Ig-like V-type domain occupies 48-164 (KLVVETTEES…ESGLVELELR (117 aa)). Disulfide bonds link Cys70–Cys146, Cys188–Cys259, Cys212–Cys233, Cys286–Cys355, and Cys311–Cys332. Link domains lie at 166 to 261 (VVFP…FCFA) and 266 to 357 (GRVY…YCYV).

The protein belongs to the HAPLN family.

It localises to the secreted. It is found in the extracellular space. The protein localises to the extracellular matrix. In terms of biological role, may function in hyaluronic acid binding. The sequence is that of Hyaluronan and proteoglycan link protein 3 (Hapln3) from Mus musculus (Mouse).